We begin with the raw amino-acid sequence, 165 residues long: Cyclic pyranopterin monophosphate synthase (165 aa).

Residues 83–85 and 120–121 each bind substrate; these read FCH and ME. Asp-135 is an active-site residue.

The protein belongs to the MoaC family. As to quaternary structure, homohexamer; trimer of dimers.

The enzyme catalyses (8S)-3',8-cyclo-7,8-dihydroguanosine 5'-triphosphate = cyclic pyranopterin phosphate + diphosphate. It participates in cofactor biosynthesis; molybdopterin biosynthesis. Catalyzes the conversion of (8S)-3',8-cyclo-7,8-dihydroguanosine 5'-triphosphate to cyclic pyranopterin monophosphate (cPMP). This Xanthomonas campestris pv. campestris (strain B100) protein is Cyclic pyranopterin monophosphate synthase.